The sequence spans 365 residues: MNTLGCFLRLTTFGESHGDMIGGVLDGMPSGIKIDYALLENEMKRRQGGRNVFITPRKEDDKVEITSGVFEDFSTGTPIGFLIHNQRARSKDYDNIKNLFRPSHADFTYFHKYGIRDFRGGGRSSARESAIRVAAGAFAKMLLREIGIVCESGIIEIGGIEAKNYDFNHALKSEIFALDKEQEEAQKTAIQNAIKNHDSIGGVALIRARSVKRNQKLPIGLGQGLYAKLDAKIAEAMMGLNGVKAVEIGKGVESSLLKGSEYNDLMDQKGFLSNRSGGVLGGMSNGEEIIVRVHFKPTPSIFQPQQTIDINNHECECLLKGRHDPCIAIRGSVVCESLLSLVLADMVLLNLTSKIEYLKTIYNEN.

Arginine 46 contributes to the NADP(+) binding site. Residues 123–125 (RSS), 241–242 (NG), glycine 281, 296–300 (KPTPS), and arginine 322 each bind FMN.

This sequence belongs to the chorismate synthase family. Homotetramer. Requires FMNH2 as cofactor.

It carries out the reaction 5-O-(1-carboxyvinyl)-3-phosphoshikimate = chorismate + phosphate. Its pathway is metabolic intermediate biosynthesis; chorismate biosynthesis; chorismate from D-erythrose 4-phosphate and phosphoenolpyruvate: step 7/7. Catalyzes the anti-1,4-elimination of the C-3 phosphate and the C-6 proR hydrogen from 5-enolpyruvylshikimate-3-phosphate (EPSP) to yield chorismate, which is the branch point compound that serves as the starting substrate for the three terminal pathways of aromatic amino acid biosynthesis. This reaction introduces a second double bond into the aromatic ring system. The chain is Chorismate synthase from Helicobacter pylori (strain HPAG1).